A 346-amino-acid chain; its full sequence is 36.4 kDa proline-rich protein (346 aa).

The segment at 11–144 is disordered; the sequence is PYPPSTPKHP…PFTPKPPSPI (134 aa). Pro residues-rich tracts occupy residues 25 to 42, 51 to 81, and 89 to 144; these read KVKP…PSTP, VKPP…PSTP, and QKPC…PSPI.

The sequence is that of 36.4 kDa proline-rich protein (TPRP-F1) from Solanum lycopersicum (Tomato).